Consider the following 241-residue polypeptide: Large ribosomal subunit protein uL3 (241 aa).

The protein belongs to the universal ribosomal protein uL3 family. In terms of assembly, part of the 50S ribosomal subunit. Forms a cluster with proteins L14 and L19.

In terms of biological role, one of the primary rRNA binding proteins, it binds directly near the 3'-end of the 23S rRNA, where it nucleates assembly of the 50S subunit. The sequence is that of Large ribosomal subunit protein uL3 from Aquifex aeolicus (strain VF5).